Here is a 358-residue protein sequence, read N- to C-terminus: S-adenosylmethionine:tRNA ribosyltransferase-isomerase (358 aa).

Belongs to the QueA family. As to quaternary structure, monomer.

It localises to the cytoplasm. It carries out the reaction 7-aminomethyl-7-carbaguanosine(34) in tRNA + S-adenosyl-L-methionine = epoxyqueuosine(34) in tRNA + adenine + L-methionine + 2 H(+). The protein operates within tRNA modification; tRNA-queuosine biosynthesis. Its function is as follows. Transfers and isomerizes the ribose moiety from AdoMet to the 7-aminomethyl group of 7-deazaguanine (preQ1-tRNA) to give epoxyqueuosine (oQ-tRNA). This is S-adenosylmethionine:tRNA ribosyltransferase-isomerase from Rhodopseudomonas palustris (strain BisA53).